The following is a 232-amino-acid chain: MIIIEKIKRGLIVSCQALENEPLHSSFIMSKMALAAKMGGAIGIRANGVNDISQIKLEVDLPIIGIIKRNYNNCDVFITPTMKEIDELCNEGVDIIALDATFRNRPDSVSLDDFFKSIKKKYPKQCLMADISSLDEAINADKLGFDFIGTTLYGYTKSTNGLDIADNDFNFLKTLINSNLKSTLIVEGKIDTPLKAQKCFEMGVDLVVVGGAITRPVEITKKFVEKINQVKR.

The protein belongs to the NanE family.

It carries out the reaction an N-acyl-D-glucosamine 6-phosphate = an N-acyl-D-mannosamine 6-phosphate. Its pathway is amino-sugar metabolism; N-acetylneuraminate degradation; D-fructose 6-phosphate from N-acetylneuraminate: step 3/5. In terms of biological role, converts N-acetylmannosamine-6-phosphate (ManNAc-6-P) to N-acetylglucosamine-6-phosphate (GlcNAc-6-P). This is Putative N-acetylmannosamine-6-phosphate 2-epimerase from Borreliella afzelii (strain PKo) (Borrelia afzelii).